A 323-amino-acid polypeptide reads, in one-letter code: Sphingolipid delta(4)-desaturase DES1 (323 aa).

Gly2 is lipidated: N-myristoyl glycine. 2 consecutive transmembrane segments (helical) span residues 41–61 and 68–88; these read HNLIWIVAMMLLVQLASFYLV and WVIFWSYVFGSCLNHSMTLAI. The Histidine box-1 signature appears at 89–93; sequence HEISH. A helical membrane pass occupies residues 104–124; the sequence is WNRWFGMFANLSLGVPYSISF. The short motif at 128-132 is the Histidine box-2 element; sequence HMDHH. Transmembrane regions (helical) follow at residues 152–172, 184–204, and 209–229; these read FFCTTFRKFVWVILQPLFYAF, YLEIINTVIQITFDIIIYYVF, and LVYMLAATLLGLGLHPISGHF. The Histidine box-3 signature appears at 259 to 263; that stretch reads HNEHH. The residue at position 307 (Ser307) is a Phosphoserine.

The protein belongs to the fatty acid desaturase type 1 family. DEGS subfamily. Interacts with RLBP1; the interaction increases synthesis of chromophore-precursors by DEGS1. Post-translationally, myristoylation can target the enzyme to the mitochondria leading to an increase in ceramide levels. As to expression, detected in testis. Detected in pachytene spermatocytes and round spermatids. Expressed in retina and retinal pigment epithelium by Mueller cells (at protein level).

It localises to the mitochondrion membrane. Its subcellular location is the endoplasmic reticulum membrane. It carries out the reaction an N-acylsphinganine + 2 Fe(II)-[cytochrome b5] + O2 + 2 H(+) = an N-acylsphing-4-enine + 2 Fe(III)-[cytochrome b5] + 2 H2O. It catalyses the reaction all-trans-retinol = 11-cis-retinol. The enzyme catalyses all-trans-retinol = 9-cis-retinol. The catalysed reaction is all-trans-retinol = 13-cis-retinol. It carries out the reaction 11-cis-retinol = 13-cis-retinol. It catalyses the reaction 11-cis-retinol = 9-cis-retinol. Has sphingolipid-delta-4-desaturase activity. Converts D-erythro-sphinganine to D-erythro-sphingosine (E-sphing-4-enine). Catalyzes the equilibrium isomerization of retinols. This is Sphingolipid delta(4)-desaturase DES1 from Mus musculus (Mouse).